Here is a 573-residue protein sequence, read N- to C-terminus: MTQISRQQYADLYGPTIGDKIRLGDSDLYVEIEKDLRATYGDELQYGGGKTLRDGMGSENFLTQEAGCLDLVITNVTVIDAIQGVVKADVGIRNGRIVGLGKAGNPSTKDGVTRGLVTGASTDAISGEHLILTAGGMDTHVHYIAPQQVEAALSNGITTLWGGGIGPVDGTNGVTTTNGPWNLEMMLRSIEGLPINFGIQGKGNSTGIAPLIEQLEAGAAGFKVHEDYGATPATIRACLSVADEYDVSVAVHTDTLNESGYVEDTIAAFDGRSVHTYHSEGAGGGHAPDLLKVVGQNNILPSSTNPTLPCGKNSVAELFDMIMVCHNLNPKIPSDVAFAESRVRAETIVAESVLHDMGAISMIGSDSQAMGRLGETFLRAIQTADAMKKARGPLPEDAPGNDNFRVLRYIAKVTINPALTAGVGDVIGSIESGKFADLVLWEPAFFGVKPKLVLKGGLVAWANMGDPNASLPTPQPMYYRPMFAAYGSALQKTSITFVSRAAYDKGVADRFGLQRLVMPVSGTRVIGKAHMVRNSYLPNIEVDPQTFAVKVDGVHATVKPPQSISLNQLYFFS.

The 439-residue stretch at 135 to 573 (GGMDTHVHYI…ISLNQLYFFS (439 aa)) folds into the Urease domain. Residues His140, His142, and Lys223 each coordinate Ni(2+). Lys223 carries the N6-carboxylysine modification. His225 serves as a coordination point for substrate. 2 residues coordinate Ni(2+): His252 and His278. Catalysis depends on His326, which acts as the Proton donor. Asp366 serves as a coordination point for Ni(2+).

The protein belongs to the metallo-dependent hydrolases superfamily. Urease alpha subunit family. As to quaternary structure, heterotrimer of UreA (gamma), UreB (beta) and UreC (alpha) subunits. Three heterotrimers associate to form the active enzyme. Ni cation serves as cofactor. Post-translationally, carboxylation allows a single lysine to coordinate two nickel ions.

The protein resides in the cytoplasm. The enzyme catalyses urea + 2 H2O + H(+) = hydrogencarbonate + 2 NH4(+). Its pathway is nitrogen metabolism; urea degradation; CO(2) and NH(3) from urea (urease route): step 1/1. Functionally, disrupting the ure2 operon has no effect on urease activity or pathogen survival in BALB/c mice when administered orally. This Brucella abortus (strain 2308) protein is Urease subunit alpha 2.